Reading from the N-terminus, the 542-residue chain is MDSVSNVSVNEQGKFNDKEEGFSNLKSLKHVSHSETDFEVSNDEDNQLLELGYKPVFKREFSTWATFSFAFSISGLFATVVTTYSYPLISGGAPSAVWCWLIAGAGCMCIALSVAELVSAYPTSGGLYFTCKDLVPARSMPVVAWVVGWLNLLGQAAGVSSTDWSCAQLLLAAVSISTDLKYIPTNQHIVGVMAAVIVFHGLVNSLSTRWLDRITRFYATFHLIVLVVCMICLLAKCPKFNTGKYVFTDVQASSGWHPIGFSFLFGFLSVAWCMTDYDATAHIAEEIENAAVRAPNAIALALSITYVLGWVFNIVLAFTMGTDLDSLINSELGQPVAQIFYNVLGKKGSMAFTILSFIIINFTGITAMQANARTIWAFSRDQALPFSRYWYKINKTTTTPVIAVWLNVVFCIALNLIGLGSIEAIEAIFSVCAIALDWSYVIPIACKLIFGKRLNYKPGPWNLGWASHFVNAYAVCWTAFVSVIFLMPTVRPVTPQNMNYAVVVLAGVLLFSLVYWWSGARKSYIGPRINVDMESEDPFKTE.

A glycan (N-linked (GlcNAc...) asparagine) is linked at asparagine 6. 8 helical membrane-spanning segments follow: residues 61 to 81 (FSTWATFSFAFSISGLFATVV), 95 to 115 (SAVWCWLIAGAGCMCIALSVA), 139 to 159 (SMPVVAWVVGWLNLLGQAAGV), 188 to 208 (HIVGVMAAVIVFHGLVNSLST), 217 to 237 (FYATFHLIVLVVCMICLLAKC), 255 to 275 (GWHPIGFSFLFGFLSVAWCMT), 298 to 318 (IALALSITYVLGWVFNIVLAF), and 348 to 368 (GSMAFTILSFIIINFTGITAM). Asparagine 394 carries N-linked (GlcNAc...) asparagine glycosylation. 4 helical membrane-spanning segments follow: residues 402–422 (IAVWLNVVFCIALNLIGLGSI), 424–444 (AIEAIFSVCAIALDWSYVIPI), 469–489 (FVNAYAVCWTAFVSVIFLMPT), and 500–520 (YAVVVLAGVLLFSLVYWWSGA).

This sequence belongs to the amino acid-polyamine-organocation (APC) superfamily.

The protein localises to the golgi apparatus. The protein resides in the membrane. This is an uncharacterized protein from Schizosaccharomyces pombe (strain 972 / ATCC 24843) (Fission yeast).